The sequence spans 311 residues: Malate dehydrogenase (311 aa).

NAD(+) contacts are provided by residues G7–G13 and D34. Positions 81 and 87 each coordinate substrate. Residues N94 and I117–N119 each bind NAD(+). The substrate site is built by N119 and R153. The active-site Proton acceptor is the H177. M227 is a binding site for NAD(+).

It belongs to the LDH/MDH superfamily. MDH type 1 family. In terms of assembly, homodimer.

The enzyme catalyses (S)-malate + NAD(+) = oxaloacetate + NADH + H(+). Functionally, catalyzes the reversible oxidation of malate to oxaloacetate. The sequence is that of Malate dehydrogenase from Aliivibrio salmonicida (strain LFI1238) (Vibrio salmonicida (strain LFI1238)).